Here is a 719-residue protein sequence, read N- to C-terminus: Polyphosphate kinase (719 aa).

Asn-54 lines the ATP pocket. Mg(2+) contacts are provided by Arg-379 and Arg-409. A PLD phosphodiesterase domain is found at 434-468; that stretch reads THLKTHSKIALVVKRMNNKLTSFIHLGTGNYNDKT. The Phosphohistidine intermediate role is filled by His-439. ATP contacts are provided by Tyr-472, Arg-568, and His-596.

It belongs to the polyphosphate kinase 1 (PPK1) family. It depends on Mg(2+) as a cofactor. Post-translationally, an intermediate of this reaction is the autophosphorylated ppk in which a phosphate is covalently linked to a histidine residue through a N-P bond.

It catalyses the reaction [phosphate](n) + ATP = [phosphate](n+1) + ADP. In terms of biological role, catalyzes the reversible transfer of the terminal phosphate of ATP to form a long-chain polyphosphate (polyP). The protein is Polyphosphate kinase of Staphylococcus saprophyticus subsp. saprophyticus (strain ATCC 15305 / DSM 20229 / NCIMB 8711 / NCTC 7292 / S-41).